The following is a 514-amino-acid chain: Extracellular exo-inulinase inuE (514 aa).

The first 18 residues, 1–18 (MRAFLALIFLTFVMNVES), serve as a signal peptide directing secretion. Residues 33–34 (ND) and Q52 contribute to the substrate site. The active-site Nucleophile is D34. An N-linked (GlcNAc...) asparagine glycan is attached at N56. Positions 60 and 95 each coordinate substrate. N-linked (GlcNAc...) asparagine glycosylation is found at N104 and N110. 162–163 (RD) serves as a coordination point for substrate. Residues N197 and N203 are each glycosylated (N-linked (GlcNAc...) asparagine). 2 residues coordinate substrate: E214 and W300. E214 acts as the Proton donor/acceptor in catalysis. 4 N-linked (GlcNAc...) asparagine glycosylation sites follow: N357, N371, N389, and N422.

It belongs to the glycosyl hydrolase 32 family.

The protein resides in the secreted. The enzyme catalyses Hydrolysis of terminal, non-reducing (2-&gt;1)- and (2-&gt;6)-linked beta-D-fructofuranose residues in fructans.. Its function is as follows. Exo-inulinase involved in utilization of the plant storage polymer inulin, consisting of fructooligosaccharides with a degree of polymerization (DP) value from 2 to 60. Splits off terminal fructose units successively from the non-reducing end of the inulin molecule. This chain is Extracellular exo-inulinase inuE, found in Meyerozyma guilliermondii (Yeast).